A 418-amino-acid polypeptide reads, in one-letter code: Histidine--tRNA ligase (418 aa).

The protein belongs to the class-II aminoacyl-tRNA synthetase family.

It localises to the cytoplasm. It catalyses the reaction tRNA(His) + L-histidine + ATP = L-histidyl-tRNA(His) + AMP + diphosphate + H(+). This Methanococcus aeolicus (strain ATCC BAA-1280 / DSM 17508 / OCM 812 / Nankai-3) protein is Histidine--tRNA ligase.